A 203-amino-acid polypeptide reads, in one-letter code: Peptide deformylase (203 aa).

Residues cysteine 121 and histidine 163 each coordinate Fe cation. Glutamate 164 is a catalytic residue. Histidine 167 is a binding site for Fe cation.

The protein belongs to the polypeptide deformylase family. It depends on Fe(2+) as a cofactor.

It catalyses the reaction N-terminal N-formyl-L-methionyl-[peptide] + H2O = N-terminal L-methionyl-[peptide] + formate. In terms of biological role, removes the formyl group from the N-terminal Met of newly synthesized proteins. Requires at least a dipeptide for an efficient rate of reaction. N-terminal L-methionine is a prerequisite for activity but the enzyme has broad specificity at other positions. The polypeptide is Peptide deformylase (Prochlorococcus marinus (strain SARG / CCMP1375 / SS120)).